The primary structure comprises 61 residues: Cytochrome c oxidase subunit 9, mitochondrial (61 aa).

At 1-13 (MAIAPITGTLKRK) the chain is on the mitochondrial matrix side. A helical transmembrane segment spans residues 14-36 (IITDISIGFACGFALATGYWYIE). The Mitochondrial intermembrane portion of the chain corresponds to 37-56 (HKPLIVKREAYYAKLKAQQE). Residues 57 to 61 (AEDSA) constitute a propeptide, removed in mature form.

The protein belongs to the fungal cytochrome c oxidase subunit 7a family. In terms of assembly, component of the cytochrome c oxidase (complex IV, CIV), a multisubunit enzyme composed of a catalytic core of 3 subunits and several supernumerary subunits. The complex exists as a monomer or a dimer and forms supercomplexes (SCs) in the inner mitochondrial membrane with ubiquinol-cytochrome c oxidoreductase (cytochrome b-c1 complex, complex III, CIII).

The protein resides in the mitochondrion inner membrane. It functions in the pathway energy metabolism; oxidative phosphorylation. In terms of biological role, component of the cytochrome c oxidase, the last enzyme in the mitochondrial electron transport chain which drives oxidative phosphorylation. The respiratory chain contains 3 multisubunit complexes succinate dehydrogenase (complex II, CII), ubiquinol-cytochrome c oxidoreductase (cytochrome b-c1 complex, complex III, CIII) and cytochrome c oxidase (complex IV, CIV), that cooperate to transfer electrons derived from NADH and succinate to molecular oxygen, creating an electrochemical gradient over the inner membrane that drives transmembrane transport and the ATP synthase. Cytochrome c oxidase is the component of the respiratory chain that catalyzes the reduction of oxygen to water. Electrons originating from reduced cytochrome c in the intermembrane space (IMS) are transferred via the dinuclear copper A center (CU(A)) of subunit 2 and heme A of subunit 1 to the active site in subunit 1, a binuclear center (BNC) formed by heme A3 and copper B (CU(B)). The BNC reduces molecular oxygen to 2 water molecules using 4 electrons from cytochrome c in the IMS and 4 protons from the mitochondrial matrix. This chain is Cytochrome c oxidase subunit 9, mitochondrial (COX9), found in Debaryomyces hansenii (strain ATCC 36239 / CBS 767 / BCRC 21394 / JCM 1990 / NBRC 0083 / IGC 2968) (Yeast).